The chain runs to 453 residues: Probable glycine dehydrogenase (decarboxylating) subunit 1 (453 aa).

It belongs to the GcvP family. N-terminal subunit subfamily. As to quaternary structure, the glycine cleavage system is composed of four proteins: P, T, L and H. In this organism, the P 'protein' is a heterodimer of two subunits.

The enzyme catalyses N(6)-[(R)-lipoyl]-L-lysyl-[glycine-cleavage complex H protein] + glycine + H(+) = N(6)-[(R)-S(8)-aminomethyldihydrolipoyl]-L-lysyl-[glycine-cleavage complex H protein] + CO2. Its function is as follows. The glycine cleavage system catalyzes the degradation of glycine. The P protein binds the alpha-amino group of glycine through its pyridoxal phosphate cofactor; CO(2) is released and the remaining methylamine moiety is then transferred to the lipoamide cofactor of the H protein. This is Probable glycine dehydrogenase (decarboxylating) subunit 1 from Methylococcus capsulatus (strain ATCC 33009 / NCIMB 11132 / Bath).